Consider the following 760-residue polypeptide: Catalase-peroxidase (760 aa).

The tract at residues 1–57 (MTDSQDNRTPESPQGVDRKAEGGCPVLHDGVTAQGSESENPAIDSPTPRTGGRPNSL) is disordered. The tryptophyl-tyrosyl-methioninium (Trp-Tyr) (with M-277) cross-link spans 129–251 (WHAAGTYRIH…LGAVQMGLIY (123 aa)). H130 (proton acceptor) is an active-site residue. Residues 251-277 (YVNPEGPNGNPDPLASARDIRETFARM) constitute a cross-link (tryptophyl-tyrosyl-methioninium (Tyr-Met) (with W-129)). Residue H292 coordinates heme b.

It belongs to the peroxidase family. Peroxidase/catalase subfamily. As to quaternary structure, homodimer or homotetramer. Heme b serves as cofactor. Post-translationally, formation of the three residue Trp-Tyr-Met cross-link is important for the catalase, but not the peroxidase activity of the enzyme.

It catalyses the reaction H2O2 + AH2 = A + 2 H2O. The enzyme catalyses 2 H2O2 = O2 + 2 H2O. In terms of biological role, bifunctional enzyme with both catalase and broad-spectrum peroxidase activity. This Nocardioides sp. (strain ATCC BAA-499 / JS614) protein is Catalase-peroxidase.